A 90-amino-acid polypeptide reads, in one-letter code: MARMVQCIKLGREAEGLDFPPLPGELGKKVYENVSKEAWQAWLRHQTMLINENRLNLADSRARQYLTQQLQNYFFGTGADMPAGFVPPSV.

This sequence belongs to the Fe(2+)-trafficking protein family.

Could be a mediator in iron transactions between iron acquisition and iron-requiring processes, such as synthesis and/or repair of Fe-S clusters in biosynthetic enzymes. In Laribacter hongkongensis (strain HLHK9), this protein is Probable Fe(2+)-trafficking protein.